The primary structure comprises 422 residues: 3-isopropylmalate dehydratase large subunit (422 aa).

3 residues coordinate [4Fe-4S] cluster: C294, C354, and C357.

It belongs to the aconitase/IPM isomerase family. LeuC type 2 subfamily. As to quaternary structure, heterodimer of LeuC and LeuD. It depends on [4Fe-4S] cluster as a cofactor.

It carries out the reaction (2R,3S)-3-isopropylmalate = (2S)-2-isopropylmalate. The protein operates within amino-acid biosynthesis; L-leucine biosynthesis; L-leucine from 3-methyl-2-oxobutanoate: step 2/4. Catalyzes the isomerization between 2-isopropylmalate and 3-isopropylmalate, via the formation of 2-isopropylmaleate. The protein is 3-isopropylmalate dehydratase large subunit of Mycolicibacterium smegmatis (strain ATCC 700084 / mc(2)155) (Mycobacterium smegmatis).